Consider the following 41-residue polypeptide: Large ribosomal subunit protein bL36B (41 aa).

This sequence belongs to the bacterial ribosomal protein bL36 family.

The protein is Large ribosomal subunit protein bL36B of Haemophilus ducreyi (strain 35000HP / ATCC 700724).